We begin with the raw amino-acid sequence, 353 residues long: 4-hydroxy-3-methylbut-2-en-1-yl diphosphate synthase (flavodoxin) (353 aa).

Residues cysteine 263, cysteine 266, cysteine 298, and glutamate 305 each coordinate [4Fe-4S] cluster.

This sequence belongs to the IspG family. It depends on [4Fe-4S] cluster as a cofactor.

It carries out the reaction (2E)-4-hydroxy-3-methylbut-2-enyl diphosphate + oxidized [flavodoxin] + H2O + 2 H(+) = 2-C-methyl-D-erythritol 2,4-cyclic diphosphate + reduced [flavodoxin]. Its pathway is isoprenoid biosynthesis; isopentenyl diphosphate biosynthesis via DXP pathway; isopentenyl diphosphate from 1-deoxy-D-xylulose 5-phosphate: step 5/6. Its function is as follows. Converts 2C-methyl-D-erythritol 2,4-cyclodiphosphate (ME-2,4cPP) into 1-hydroxy-2-methyl-2-(E)-butenyl 4-diphosphate. In Geobacter sulfurreducens (strain ATCC 51573 / DSM 12127 / PCA), this protein is 4-hydroxy-3-methylbut-2-en-1-yl diphosphate synthase (flavodoxin).